The following is an 85-amino-acid chain: Conotoxin Lt28.2 (85 aa).

Positions 1-21 (MPKLEMMLLVLLILPLCYIDA) are cleaved as a signal peptide. A propeptide spanning residues 22–40 (VGPPPPWNMEDEIIEHWQK) is cleaved from the precursor.

The protein belongs to the conotoxin D superfamily. In terms of processing, contains 5 disulfide bonds. As to expression, expressed by the venom duct.

Its subcellular location is the secreted. In terms of biological role, probable neurotoxin. This Conus litteratus (Lettered cone) protein is Conotoxin Lt28.2.